The following is a 288-amino-acid chain: Formamidopyrimidine-DNA glycosylase (288 aa).

Pro-2 (schiff-base intermediate with DNA) is an active-site residue. Glu-3 functions as the Proton donor in the catalytic mechanism. Lys-58 functions as the Proton donor; for beta-elimination activity in the catalytic mechanism. DNA contacts are provided by His-99, Arg-118, and Lys-161. The FPG-type zinc finger occupies 252–288 (RVYDREAEPCPREGCGGTIKRIVQAGRSTFFCAKCQR). Arg-278 (proton donor; for delta-elimination activity) is an active-site residue.

This sequence belongs to the FPG family. As to quaternary structure, monomer. Zn(2+) is required as a cofactor.

It catalyses the reaction Hydrolysis of DNA containing ring-opened 7-methylguanine residues, releasing 2,6-diamino-4-hydroxy-5-(N-methyl)formamidopyrimidine.. It carries out the reaction 2'-deoxyribonucleotide-(2'-deoxyribose 5'-phosphate)-2'-deoxyribonucleotide-DNA = a 3'-end 2'-deoxyribonucleotide-(2,3-dehydro-2,3-deoxyribose 5'-phosphate)-DNA + a 5'-end 5'-phospho-2'-deoxyribonucleoside-DNA + H(+). In terms of biological role, involved in base excision repair of DNA damaged by oxidation or by mutagenic agents. Acts as a DNA glycosylase that recognizes and removes damaged bases. Has a preference for oxidized purines, such as 7,8-dihydro-8-oxoguanine (8-oxoG). Has AP (apurinic/apyrimidinic) lyase activity and introduces nicks in the DNA strand. Cleaves the DNA backbone by beta-delta elimination to generate a single-strand break at the site of the removed base with both 3'- and 5'-phosphates. This Beijerinckia indica subsp. indica (strain ATCC 9039 / DSM 1715 / NCIMB 8712) protein is Formamidopyrimidine-DNA glycosylase.